We begin with the raw amino-acid sequence, 283 residues long: MNDDLPILPPGFGPGSHGEEERPDCPSMPRAMRRFERPALPEPGQLSGHPIALALLERLQEALGAYRIGEQSRVIGLDRQPKADLKLLQQILGEGEVAIQVGGQRPARIQETVLAGVWWVQLQIGRGEVVGQWLEVADVPALVRRRAFAETRWPQLGELPDGLLNAGPVLVELLDAAKRHAERALATPHAVNLSLLPFSPEDRRFLAERLGEGSVTLLSRGYGNCRIASTATPGIWCVQYFNSSDRLILDTLEVTGIPQVACAAQEDIDDSAERLREIREALE.

Positions 1 to 29 (MNDDLPILPPGFGPGSHGEEERPDCPSMP) are disordered.

Belongs to the HupH/HyaF family.

The sequence is that of Hydrogenase expression/formation protein HoxQ (hoxQ) from Azotobacter vinelandii.